Here is a 730-residue protein sequence, read N- to C-terminus: Elongation factor 2 (730 aa).

The 242-residue stretch at 19–260 folds into the tr-type G domain; sequence EKIRNIGIVA…MVIRFLPNPL (242 aa). GTP is bound by residues 28–35, 94–98, and 148–151; these read AHIDHGKT, DTPGH, and NKVD. Residue His-596 is modified to Diphthamide.

The protein belongs to the TRAFAC class translation factor GTPase superfamily. Classic translation factor GTPase family. EF-G/EF-2 subfamily.

The protein resides in the cytoplasm. Catalyzes the GTP-dependent ribosomal translocation step during translation elongation. During this step, the ribosome changes from the pre-translocational (PRE) to the post-translocational (POST) state as the newly formed A-site-bound peptidyl-tRNA and P-site-bound deacylated tRNA move to the P and E sites, respectively. Catalyzes the coordinated movement of the two tRNA molecules, the mRNA and conformational changes in the ribosome. The chain is Elongation factor 2 (fusA) from Methanosarcina thermophila.